The sequence spans 698 residues: Polyribonucleotide nucleotidyltransferase (698 aa).

Asp485 and Asp491 together coordinate Mg(2+). The region spanning Pro552–Ile611 is the KH domain. Residues Gly621–Lys689 enclose the S1 motif domain.

It belongs to the polyribonucleotide nucleotidyltransferase family. In terms of assembly, component of the RNA degradosome, which is a multiprotein complex involved in RNA processing and mRNA degradation. Mg(2+) is required as a cofactor.

The protein localises to the cytoplasm. It carries out the reaction RNA(n+1) + phosphate = RNA(n) + a ribonucleoside 5'-diphosphate. Its function is as follows. Involved in mRNA degradation. Catalyzes the phosphorolysis of single-stranded polyribonucleotides processively in the 3'- to 5'-direction. The polypeptide is Polyribonucleotide nucleotidyltransferase (Shewanella frigidimarina (strain NCIMB 400)).